A 359-amino-acid polypeptide reads, in one-letter code: 3-dehydroquinate synthase (359 aa).

Residues 71–76 (DGEAYK), 105–109 (GVIGD), 129–130 (TT), lysine 142, lysine 151, and 169–172 (TLGT) each bind NAD(+). Zn(2+) contacts are provided by glutamate 184, histidine 247, and histidine 264.

It belongs to the sugar phosphate cyclases superfamily. Dehydroquinate synthase family. Requires Co(2+) as cofactor. The cofactor is Zn(2+). NAD(+) is required as a cofactor.

It localises to the cytoplasm. The catalysed reaction is 7-phospho-2-dehydro-3-deoxy-D-arabino-heptonate = 3-dehydroquinate + phosphate. It functions in the pathway metabolic intermediate biosynthesis; chorismate biosynthesis; chorismate from D-erythrose 4-phosphate and phosphoenolpyruvate: step 2/7. In terms of biological role, catalyzes the conversion of 3-deoxy-D-arabino-heptulosonate 7-phosphate (DAHP) to dehydroquinate (DHQ). This Thiobacillus denitrificans (strain ATCC 25259 / T1) protein is 3-dehydroquinate synthase.